We begin with the raw amino-acid sequence, 442 residues long: D-galactonate dehydratase family member SSBG_02010 (442 aa).

Mg(2+) is bound at residue Asp246. His248 lines the D-arabinonate pocket. Residues Glu272 and Glu298 each coordinate Mg(2+). D-arabinonate contacts are provided by Glu298, Arg319, His348, and Glu375.

Belongs to the mandelate racemase/muconate lactonizing enzyme family. GalD subfamily.

Has no detectable activity with D-mannonate and with a panel of 70 other acid sugars (in vitro), in spite of the conservation of the residues that are expected to be important for catalytic activity and cofactor binding. May have evolved a divergent function. This is D-galactonate dehydratase family member SSBG_02010 from Streptomyces sp. (strain SPB074).